We begin with the raw amino-acid sequence, 85 residues long: 4-hydroxyphenylacetate decarboxylase small subunit (85 aa).

[4Fe-4S] cluster is bound by residues His4, Cys7, Cys20, Cys34, Cys43, Cys46, Cys60, and Cys78.

It belongs to the HPA decarboxylase small subunit family. Heterooctamer consisting of 4 large (HpdB) subunits and 4 small (HpdC) subunits, arranged as a tetramer of heterodimers. [4Fe-4S] cluster is required as a cofactor.

It catalyses the reaction 4-hydroxyphenylacetate + H(+) = 4-methylphenol + CO2. It carries out the reaction 3,4-dihydroxyphenylacetate + H(+) = 4-methylcatechol + CO2. Its function is as follows. Component of the HPA decarboxylase that decarboxylates phenylacetates with a hydroxyl group in the p-position. Active toward 4-hydroxyphenylacetate and 3,4-dihydroxyphenylacetate, forming 4-methylphenol and 4-methylcatechol, respectively. Is likely involved in the catabolism of aromatic amino acids such as tyrosine fermentation. 4-methylphenol (p-cresol) formation provides metabolic toxicity, which allows an active suppression of other microbes and may provide growth advantages for the producers in highly competitive environments. The small subunit is essential for enzymatic activity of HPA decarboxylase, and also seems to be involved in the regulation of the enzyme oligomeric state and catalytic activity. The chain is 4-hydroxyphenylacetate decarboxylase small subunit from Clostridioides difficile (strain 630) (Peptoclostridium difficile).